We begin with the raw amino-acid sequence, 636 residues long: Threonine--tRNA ligase (636 aa).

Residues Met1 to Ser61 enclose the TGS domain. Residues Glu244 to Pro534 form a catalytic region. 3 residues coordinate Zn(2+): Cys335, His386, and His511.

The protein belongs to the class-II aminoacyl-tRNA synthetase family. In terms of assembly, homodimer. Requires Zn(2+) as cofactor.

It is found in the cytoplasm. It carries out the reaction tRNA(Thr) + L-threonine + ATP = L-threonyl-tRNA(Thr) + AMP + diphosphate + H(+). In terms of biological role, catalyzes the attachment of threonine to tRNA(Thr) in a two-step reaction: L-threonine is first activated by ATP to form Thr-AMP and then transferred to the acceptor end of tRNA(Thr). Also edits incorrectly charged L-seryl-tRNA(Thr). This is Threonine--tRNA ligase from Natranaerobius thermophilus (strain ATCC BAA-1301 / DSM 18059 / JW/NM-WN-LF).